Reading from the N-terminus, the 164-residue chain is Protein-export protein SecB (164 aa).

The protein belongs to the SecB family. Homotetramer, a dimer of dimers. One homotetramer interacts with 1 SecA dimer.

The protein resides in the cytoplasm. Functionally, one of the proteins required for the normal export of preproteins out of the cell cytoplasm. It is a molecular chaperone that binds to a subset of precursor proteins, maintaining them in a translocation-competent state. It also specifically binds to its receptor SecA. This chain is Protein-export protein SecB, found in Nitrosococcus oceani (strain ATCC 19707 / BCRC 17464 / JCM 30415 / NCIMB 11848 / C-107).